Reading from the N-terminus, the 454-residue chain is C4-dicarboxylate transport protein (454 aa).

The next 9 membrane-spanning stretches (helical) occupy residues 33-53 (VQVLAAIAAGILLGHFYPDIG), 66-86 (LVKMIIAPVIFLTVATGIAGM), 101-121 (IYFLAFSTLALLVGLVVANLV), 148-168 (EQSITGFLMNIIPTTLVGAFA), 170-190 (GDILQVLFISVLFGISLAIVG), 210-230 (LVAILMKAAPIGAFGAMAFTI), 243-263 (MLIGTFYLTSFLFVFVVLGAV), 354-374 (LLLVAMLSSKGAAGITGAGFI), and 377-397 (AATLSVVPSVPVAGMALILGI).

It belongs to the dicarboxylate/amino acid:cation symporter (DAACS) (TC 2.A.23) family.

Its subcellular location is the cell inner membrane. Functionally, responsible for the transport of dicarboxylates such as succinate, fumarate, and malate from the periplasm across the membrane. In Sinorhizobium medicae (strain WSM419) (Ensifer medicae), this protein is C4-dicarboxylate transport protein.